The sequence spans 418 residues: Probable mitochondrial adenine nucleotide transporter BTL2 (418 aa).

3 Solcar repeats span residues 122 to 205 (MNTR…YRKQ), 215 to 300 (ATNF…LKSS), and 329 to 414 (LGPI…MKIV). A run of 6 helical transmembrane segments spans residues 127–147 (HLWA…PLER), 180–200 (GNLL…CAYD), 221–241 (FVAG…LDTI), 276–296 (LVPS…VYDI), 335–355 (LMYG…FEVV), and 383–403 (IPAL…SASI).

This sequence belongs to the mitochondrial carrier (TC 2.A.29) family.

It localises to the mitochondrion inner membrane. In terms of biological role, probable mitochondrial adenylate carrier that catalyzes the transport of ATP, ADP and AMP. The chain is Probable mitochondrial adenine nucleotide transporter BTL2 from Arabidopsis thaliana (Mouse-ear cress).